The sequence spans 77 residues: Acyl carrier protein (77 aa).

The 76-residue stretch at 1–76 folds into the Carrier domain; it reads MATFDDVKAV…DVVNYIDNLK (76 aa). Residue Ser36 is modified to O-(pantetheine 4'-phosphoryl)serine.

This sequence belongs to the acyl carrier protein (ACP) family. 4'-phosphopantetheine is transferred from CoA to a specific serine of apo-ACP by AcpS. This modification is essential for activity because fatty acids are bound in thioester linkage to the sulfhydryl of the prosthetic group.

The protein localises to the cytoplasm. Its pathway is lipid metabolism; fatty acid biosynthesis. Carrier of the growing fatty acid chain in fatty acid biosynthesis. The chain is Acyl carrier protein from Campylobacter jejuni (strain RM1221).